Reading from the N-terminus, the 101-residue chain is NADH-quinone oxidoreductase subunit K (101 aa).

The next 3 membrane-spanning stretches (helical) occupy residues 4–24 (VGHY…GIFI), 29–49 (IIVI…NLVA), and 65–85 (FVLT…VIYF).

It belongs to the complex I subunit 4L family. As to quaternary structure, NDH-1 is composed of 14 different subunits. Subunits NuoA, H, J, K, L, M, N constitute the membrane sector of the complex.

It localises to the cell inner membrane. The catalysed reaction is a quinone + NADH + 5 H(+)(in) = a quinol + NAD(+) + 4 H(+)(out). Its function is as follows. NDH-1 shuttles electrons from NADH, via FMN and iron-sulfur (Fe-S) centers, to quinones in the respiratory chain. The immediate electron acceptor for the enzyme in this species is believed to be ubiquinone. Couples the redox reaction to proton translocation (for every two electrons transferred, four hydrogen ions are translocated across the cytoplasmic membrane), and thus conserves the redox energy in a proton gradient. The chain is NADH-quinone oxidoreductase subunit K from Sphingopyxis alaskensis (strain DSM 13593 / LMG 18877 / RB2256) (Sphingomonas alaskensis).